We begin with the raw amino-acid sequence, 68 residues long: Cx9C motif-containing protein 4 (68 aa).

Residues 4-46 enclose the CHCH domain; sequence KDPCQKQACEIQKCLQANSYMESKCQAVIQELRKCCAQYPKGR. 2 short sequence motifs (cx9C motif) span residues 7-17 and 28-38; these read CQKQACEIQKC and CQAVIQELRKC. Cystine bridges form between Cys-7–Cys-38, Cys-17–Cys-28, and Cys-39–Cys-50.

Belongs to the CMC4 family. Expressed in many tissues with a relatively high level in skeletal muscle.

The protein localises to the mitochondrion. The polypeptide is Cx9C motif-containing protein 4 (CMC4) (Homo sapiens (Human)).